The sequence spans 567 residues: DNA-binding protein REPIN1 (567 aa).

The segment at 17–52 (PRLLSGPSQESPQTLGKESRGLRQQGTSVAQSGAQA) is disordered. Polar residues predominate over residues 22-50 (GPSQESPQTLGKESRGLRQQGTSVAQSGA). At serine 27 the chain carries Phosphoserine. Threonine 30 is modified (phosphothreonine). Position 33 is an N6-acetyllysine (lysine 33). The C2H2-type 1; atypical zinc finger occupies 57–79 (HRCAHCRRHFPGWVALWLHTRRC). 7 C2H2-type zinc fingers span residues 85 to 107 (LPCPECGRRFRHAPFLALHRQVH), 116 to 138 (FACHLCGQSFRGWVALVLHLRAH), 145 to 168 (IACPKCERRFWRRKQLRAHLRRCH), 177 to 199 (FICGNCGRSFAQWDQLVAHKRVH), 236 to 258 (FQCACCGKRFRHKPNLIAHRRVH), 264 to 286 (HQCPECGKRFTNKPYLTSHRRIH), and 292 to 314 (YPCKECGRRFRHKPNLLSHSKIH). The residue at position 276 (lysine 276) is an N6-acetyllysine. Basic residues predominate over residues 305–315 (PNLLSHSKIHK). The segment at 305 to 372 (PNLLSHSKIH…HPQDPIEAPP (68 aa)) is disordered. A compositionally biased stretch (pro residues) spans 345–362 (PAVPLKPAQEPPPGAPPE). 7 consecutive C2H2-type zinc fingers follow at residues 375–397 (YSCDDCGRSFRLERFLRAHQRQH), 403–425 (FTCAECGKNFGKKTHLVAHSRVH), 431–453 (FACEECGRRFSQGSHLAAHRRDH), 459–481 (FVCPDCGKAFRHKPYLAAHRRIH), 487–509 (YVCPDCGKAFSQKSNLVSHRRIH), 515–537 (YACPDCDRSFSQKSNLITHRKSH), and 543–565 (FCCAICGQTFDDEERLLAHQKKH).

In terms of assembly, homodimers and homomultimers. Found in a complex with RIP60 and RIP100. Expressed in adipose tissue and bone tissue.

It localises to the nucleus. The protein resides in the cytoplasm. It is found in the cytosol. Sequence-specific double-stranded DNA-binding protein. Binds ATT-rich and T-rich DNA sequences and facilitates DNA bending. May regulate the expression of genes involved in cellular fatty acid import, including SCARB1/CD36, and genes involved in lipid droplet formation. May regulate the expression of LCN2, and thereby influence iron metabolism and apoptosis-related pathways. May regulate the expression of genes involved in glucose transport. This chain is DNA-binding protein REPIN1 (REPIN1), found in Homo sapiens (Human).